The sequence spans 319 residues: MTTKQTVSLFIWLPESKQKTLFISTKNHTQFELNNIIFDVTLSTELPDKEPNAIITKRTHPVGKMADEMRKYEKDHPKVLFLESSAIHDMMSSREEINALLIKNNIPIPNSFSVKSKEEVIQLLQSKQLILPFIVKPENAQGTFNAHQMKIVLEQEGIDDIHFPCLCQHYINHNNKIVKVFCIGNTLKWQTRTSLPNVHRCGIKSVDFNNQHLEDILSWPEGVIDKQDIIENSANRFGSKILEDPILLNLTSEAEMRDLAYKVRCALGVQLCGIDFIKENEQGNPLVVDVNVFPSYGGKVDFDWFVEKVALCYTEVAKI.

Residues Lys17 and Lys57 each coordinate 1D-myo-inositol 1,3,4,6-tetrakisphosphate. Lys17 is a binding site for 1D-myo-inositol 1,3,4-trisphosphate. ADP contacts are provided by Arg94 and Lys136. Positions 94 and 136 each coordinate ATP. In terms of domain architecture, ATP-grasp spans 98–317 (NALLIKNNIP…KVALCYTEVA (220 aa)). 3 residues coordinate 1D-myo-inositol 1,3,4,6-tetrakisphosphate: Gln141, Gly142, and His147. Gln141, Gly142, and His147 together coordinate 1D-myo-inositol 1,3,4-trisphosphate. Residues His147, Gln168, His169, Tyr170, and Ile171 each coordinate ADP. Positions 147, 168, 169, 170, and 171 each coordinate ATP. Lys179 is a 1D-myo-inositol 1,3,4,6-tetrakisphosphate binding site. Ser194 and Asn210 together coordinate ADP. Position 194 (Ser194) interacts with ATP. Mg(2+) is bound at residue Asp275. The ADP site is built by Val288 and Asp289. Val288, Asp289, and Asn291 together coordinate ATP. Residues Asp289, Asn291, and Ser295 each contribute to the 1D-myo-inositol 1,3,4,6-tetrakisphosphate site. Residues Asp289 and Asn291 each coordinate Mg(2+). Positions 291 and 295 each coordinate 1D-myo-inositol 1,3,4-trisphosphate.

This sequence belongs to the ITPK1 family. As to quaternary structure, monomer. Requires Mg(2+) as cofactor.

The enzyme catalyses 1D-myo-inositol 3,4,5,6-tetrakisphosphate + ATP = 1D-myo-inositol 1,3,4,5,6-pentakisphosphate + ADP + H(+). The catalysed reaction is 1D-myo-inositol 1,3,4-trisphosphate + ATP = 1D-myo-inositol 1,3,4,5-tetrakisphosphate + ADP + H(+). It catalyses the reaction 1D-myo-inositol 1,3,4-trisphosphate + ATP = 1D-myo-inositol 1,3,4,6-tetrakisphosphate + ADP + H(+). In terms of biological role, kinase that can phosphorylate various inositol polyphosphate such as Ins(3,4,5,6)P4 or Ins(1,3,4)P3. Phosphorylates Ins(3,4,5,6)P4 at position 1 to form Ins(1,3,4,5,6)P5. This reaction is thought to have regulatory importance, since Ins(3,4,5,6)P4 is an inhibitor of plasma membrane Ca(2+)-activated Cl(-) channels, while Ins(1,3,4,5,6)P5 is not. Also phosphorylates Ins(1,3,4)P3 on O-5 and O-6 to form Ins(1,3,4,6)P4, an essential molecule in the hexakisphosphate (InsP6) pathway. May also act as an isomerase that interconverts the inositol tetrakisphosphate isomers Ins(1,3,4,5)P4 and Ins(1,3,4,6)P4 in the presence of ADP and magnesium. This chain is Inositol-tetrakisphosphate 1-kinase (ITPK1), found in Entamoeba histolytica (strain ATCC 30459 / HM-1:IMSS / ABRM).